A 151-amino-acid polypeptide reads, in one-letter code: uncharacterized protein (151 aa).

Positions 1–77 (MSLLGGMWKS…LGSNPISSSR (77 aa)) are disordered. 2 stretches are compositionally biased toward low complexity: residues 19-54 (PKPSSNPLRSSGLNSGMSSRLNSKSSLRSGHSRSSN) and 63-76 (SISGSLGSNPISSS).

This is an uncharacterized protein from Methanothermobacter marburgensis (strain ATCC BAA-927 / DSM 2133 / JCM 14651 / NBRC 100331 / OCM 82 / Marburg) (Methanobacterium thermoautotrophicum).